We begin with the raw amino-acid sequence, 231 residues long: MKFFVDTADLAEIRDLAATGLLDGVTTNPSLVARTGRPFVDLVAEICDVVSGPVSAEVAATDAETMLKEGRHLARIAPNVAVKVPLTPAGLKVCRTLANEGTMVNVTLCFSAAQAILAAKAGAAFVSPFVGRLDDIGQTGLNLIAEIVEIYDRYPAFTTEVLVASIRNPTHVTESARLGAHVATMPPAVIRQLFAHPLTDKGLSQFVADWQKTGQNILEQAIPDRSGQDRA.

Lys-83 serves as the catalytic Schiff-base intermediate with substrate.

It belongs to the transaldolase family. Type 3B subfamily.

The protein resides in the cytoplasm. It carries out the reaction D-sedoheptulose 7-phosphate + D-glyceraldehyde 3-phosphate = D-erythrose 4-phosphate + beta-D-fructose 6-phosphate. It functions in the pathway carbohydrate degradation; pentose phosphate pathway; D-glyceraldehyde 3-phosphate and beta-D-fructose 6-phosphate from D-ribose 5-phosphate and D-xylulose 5-phosphate (non-oxidative stage): step 2/3. Its function is as follows. Transaldolase is important for the balance of metabolites in the pentose-phosphate pathway. In Rhodospirillum centenum (strain ATCC 51521 / SW), this protein is Probable transaldolase.